The chain runs to 485 residues: Ras-like GTPase YcjX (485 aa).

Residues 33 to 40 (GLSGAGKT) carry the Walker A motif motif. The GTP site is built by Ser35, Gly36, Gly38, Lys39, Thr40, Ala41, Trp110, Ser113, Thr114, Arg115, Lys355, Asp357, and His358. Residues Gly36, Gly38, Lys39, Thr40, Ala41, Trp110, Ser113, and Thr114 each contribute to the GDP site. Residues Lys355, Asp357, His358, Ser395, Ala396, and Ile397 each contribute to the GDP site. Ile397 lines the GTP pocket.

In terms of assembly, monomer in solution. Mg(2+) is required as a cofactor.

The catalysed reaction is GTP + H2O = GDP + phosphate + H(+). Alternates between an inactive form bound to GDP and an active form bound to GTP. Likely activated by a guanine nucleotide-exchange factor (GEF). Binds GTP and GDP. Has intrinsic GTPase activity. Does not hydrolyze ATP. May act as a transducer of stress responses. This is Ras-like GTPase YcjX from Shewanella oneidensis (strain ATCC 700550 / JCM 31522 / CIP 106686 / LMG 19005 / NCIMB 14063 / MR-1).